Reading from the N-terminus, the 265-residue chain is Transcriptional activator AggR (265 aa).

One can recognise an HTH araC/xylS-type domain in the interval 164 to 261 (DKVRNTIEKD…GITPKQFLTY (98 aa)). 2 consecutive DNA-binding regions (H-T-H motif) follow at residues 181–202 (AIIA…ESEY) and 228–251 (ISQI…VKHF).

As to quaternary structure, homodimer.

Its function is as follows. Transcriptional activator of aggregative adherence fimbria I expression in enteroaggregative E.coli. The protein is Transcriptional activator AggR (aggR) of Escherichia coli.